Consider the following 918-residue polypeptide: Plasma membrane ATPase 1 (918 aa).

Low complexity predominate over residues 1-18 (MTDTSSSSSSSSASSVSA). A disordered region spans residues 1-84 (MTDTSSSSSS…VPEEYLQTDP (84 aa)). The Cytoplasmic portion of the chain corresponds to 1–115 (MTDTSSSSSS…ADEKESLVVK (115 aa)). Over residues 33–47 (AASESSDDDDIDALI) the composition is skewed to acidic residues. S61 carries the post-translational modification Phosphoserine. A helical membrane pass occupies residues 116–136 (FVMFFVGPIQFVMEAAAILAA). Residues 137–140 (GLSD) lie on the Extracellular side of the membrane. A helical membrane pass occupies residues 141–160 (WVDFGVICGLLMLNAGVGFV). Over 161–291 (QEFQAGSIVD…GQGHFTEVLN (131 aa)) the chain is Cytoplasmic. T175 bears the Phosphothreonine mark. Residue K252 forms a Glycyl lysine isopeptide (Lys-Gly) (interchain with G-Cter in ubiquitin) linkage. Residues 292-313 (GIGIILLVLVIATLLLVWTACF) traverse the membrane as a helical segment. Over 314-325 (YRTNGIVRILRY) the chain is Extracellular. Residues 326–347 (TLGITIIGVPVGLPAVVTTTMA) traverse the membrane as a helical segment. The Cytoplasmic segment spans residues 348 to 719 (VGAAYLAKKQ…IAILDNSLDI (372 aa)). D378 functions as the 4-aspartylphosphate intermediate in the catalytic mechanism. Residue K555 forms a Glycyl lysine isopeptide (Lys-Gly) (interchain with G-Cter in ubiquitin) linkage. Positions 634 and 638 each coordinate Mg(2+). A helical membrane pass occupies residues 720–738 (DLIVFIAIFADVATLAIAY). At 739-754 (DNAPYSPKPVKWNLPR) the chain is on the extracellular side. A helical transmembrane segment spans residues 755–774 (LWGMSIILGIVLAIGSWITL). Residues 775-824 (TTMFLPKGGIIQNFGAMNGIMFLQISLTENWLIFITRAAGPFWSSIPSWQ) lie on the Cytoplasmic side of the membrane. The chain crosses the membrane as a helical span at residues 825–845 (LAGAVFAVDIIATMFTLFGWW). Residues 846–857 (SENWTDIVTVVR) lie on the Extracellular side of the membrane. The helical transmembrane segment at 858–874 (VWIWSIGIFCVLGGFYY) threads the bilayer. At 875–918 (EMSTSEAFDRLMNGKPMKEKKSTRSVEDFMAAMQRVSTQHEKET) the chain is on the cytoplasmic side. Position 911 is a phosphoserine (S911). Phosphothreonine is present on residues T912 and T918.

It belongs to the cation transport ATPase (P-type) (TC 3.A.3) family. Type IIIA subfamily. In terms of assembly, interacts with its cargot receptor EXP1 for its transport within the cell and maturation. Phosphorylated on multiple Ser and Thr residues.

It is found in the cell membrane. It carries out the reaction ATP + H2O + H(+)(in) = ADP + phosphate + 2 H(+)(out). The plasma membrane ATPase of plants and fungi is a hydrogen ion pump. The proton gradient it generates drives the active transport of nutrients by H(+)-symport. The resulting external acidification and/or internal alkinization may mediate growth responses. The polypeptide is Plasma membrane ATPase 1 (PMA1) (Saccharomyces cerevisiae (strain ATCC 204508 / S288c) (Baker's yeast)).